The sequence spans 563 residues: Chaperonin GroEL 1 (563 aa).

Residues 29 to 32 (TIGP), 86 to 90 (DGTTT), glycine 413, and aspartate 492 contribute to the ATP site. Residues 520–541 (DKPEPPSAPGAEGGDPMGGMGG) form a disordered region. The span at 530-541 (AEGGDPMGGMGG) shows a compositional bias: gly residues.

This sequence belongs to the chaperonin (HSP60) family. As to quaternary structure, forms a cylinder of 14 subunits composed of two heptameric rings stacked back-to-back. Interacts with the co-chaperonin GroES.

The protein resides in the cytoplasm. It catalyses the reaction ATP + H2O + a folded polypeptide = ADP + phosphate + an unfolded polypeptide.. Functionally, together with its co-chaperonin GroES, plays an essential role in assisting protein folding. The GroEL-GroES system forms a nano-cage that allows encapsulation of the non-native substrate proteins and provides a physical environment optimized to promote and accelerate protein folding. The chain is Chaperonin GroEL 1 from Prochlorococcus marinus (strain NATL1A).